We begin with the raw amino-acid sequence, 403 residues long: Ribosomal RNA large subunit methyltransferase I (403 aa).

The PUA domain occupies 9–88; that stretch reads YPRLVLSKGR…ESIDIAFFTR (80 aa).

Belongs to the methyltransferase superfamily. RlmI family.

The protein resides in the cytoplasm. It carries out the reaction cytidine(1962) in 23S rRNA + S-adenosyl-L-methionine = 5-methylcytidine(1962) in 23S rRNA + S-adenosyl-L-homocysteine + H(+). Functionally, specifically methylates the cytosine at position 1962 (m5C1962) of 23S rRNA. This Salmonella paratyphi A (strain ATCC 9150 / SARB42) protein is Ribosomal RNA large subunit methyltransferase I.